A 285-amino-acid chain; its full sequence is 2-dehydro-3-deoxyphosphooctonate aldolase (285 aa).

Belongs to the KdsA family.

It is found in the cytoplasm. The enzyme catalyses D-arabinose 5-phosphate + phosphoenolpyruvate + H2O = 3-deoxy-alpha-D-manno-2-octulosonate-8-phosphate + phosphate. It functions in the pathway carbohydrate biosynthesis; 3-deoxy-D-manno-octulosonate biosynthesis; 3-deoxy-D-manno-octulosonate from D-ribulose 5-phosphate: step 2/3. It participates in bacterial outer membrane biogenesis; lipopolysaccharide biosynthesis. The chain is 2-dehydro-3-deoxyphosphooctonate aldolase from Verminephrobacter eiseniae (strain EF01-2).